The following is a 465-amino-acid chain: Alpha-galacturonidase (465 aa).

NAD(+) is bound at residue 11–78 (ITIAYIGGGS…GKWLYKACET (68 aa)). Position 157 (asparagine 157) interacts with substrate. A Mn(2+)-binding site is contributed by cysteine 179. Histidine 180 acts as the Proton donor in catalysis. Histidine 216 serves as a coordination point for Mn(2+).

This sequence belongs to the glycosyl hydrolase 4 family. As to quaternary structure, homotetramer. NAD(+) is required as a cofactor. The cofactor is Mn(2+).

It carries out the reaction [(1-&gt;4)-alpha-D-galacturonosyl](n) + H2O = alpha-D-galacturonate + [(1-&gt;4)-alpha-D-galacturonosyl](n-1). Its function is as follows. Alpha-galacturonidase able to catalyze the hydrolysis of the chromogenic substrate p-nitrophenyl-alpha-D-galacturonic acid (pNPalphaGalUA). It is probable that alpha-1,4-di-galacturonate (GalUA(2)) is the naturally occurring substrate. This is Alpha-galacturonidase from Thermoanaerobacterium saccharolyticum (strain DSM 8691 / JW/SL-YS485).